We begin with the raw amino-acid sequence, 1254 residues long: Zinc finger protein BRUTUS-like At1g18910 (1254 aa).

Residues 1-30 (MGVGDPLPLPPEKNRREVNKPPDIASTSSS) are disordered. The chain crosses the membrane as a helical span at residues 454–474 (IHFLPLGLLKCVIMWFSAQLP). Residues 1013–1082 (PHKLIFGCKH…ASCSNISCSS (70 aa)) form a CHY-type zinc finger. Positions 1020, 1022, 1033, 1034, 1040, 1043, 1044, 1050, 1062, 1065, 1075, 1080, 1089, 1092, 1103, 1104, 1107, 1110, 1122, 1123, 1126, 1129, 1137, and 1139 each coordinate Zn(2+). A CTCHY-type zinc finger spans residues 1084–1147 (MGKYYCKICK…VCREKCLEDN (64 aa)). The segment at 1148 to 1190 (CPICHEYIFTSNSPVKALPCGHVMHSTCFQEYTCSHYTCPICS) adopts an RING-type; atypical zinc-finger fold.

In terms of assembly, binds zinc and iron ions.

Its subcellular location is the membrane. It localises to the nucleus. It participates in protein modification; protein ubiquitination. Probable E3 ubiquitin-protein ligase that may regulate the response to iron deficiency and thus contributes to iron homeostasis. This Arabidopsis thaliana (Mouse-ear cress) protein is Zinc finger protein BRUTUS-like At1g18910.